The following is a 954-amino-acid chain: Glycine dehydrogenase (decarboxylating) (954 aa).

Position 704 is an N6-(pyridoxal phosphate)lysine (K704).

This sequence belongs to the GcvP family. In terms of assembly, the glycine cleavage system is composed of four proteins: P, T, L and H. Requires pyridoxal 5'-phosphate as cofactor.

The catalysed reaction is N(6)-[(R)-lipoyl]-L-lysyl-[glycine-cleavage complex H protein] + glycine + H(+) = N(6)-[(R)-S(8)-aminomethyldihydrolipoyl]-L-lysyl-[glycine-cleavage complex H protein] + CO2. In terms of biological role, the glycine cleavage system catalyzes the degradation of glycine. The P protein binds the alpha-amino group of glycine through its pyridoxal phosphate cofactor; CO(2) is released and the remaining methylamine moiety is then transferred to the lipoamide cofactor of the H protein. The sequence is that of Glycine dehydrogenase (decarboxylating) from Agrobacterium fabrum (strain C58 / ATCC 33970) (Agrobacterium tumefaciens (strain C58)).